Consider the following 251-residue polypeptide: Small ribosomal subunit protein uS2B (251 aa).

Ser-2 is subject to N-acetylserine. Low complexity predominate over residues 214 to 225; the sequence is AVEEASATGATE. The disordered stretch occupies residues 214-251; the sequence is AVEEASATGATEEATEEATEETTEATEWAEDNTENATW. Residues 226 to 251 are compositionally biased toward acidic residues; sequence EATEEATEETTEATEWAEDNTENATW.

The protein belongs to the universal ribosomal protein uS2 family. In terms of assembly, component of the small ribosomal subunit. Mature ribosomes consist of a small (40S) and a large (60S) subunit. The 40S subunit contains about 33 different proteins and 1 molecule of RNA (18S). The 60S subunit contains about 49 different proteins and 3 molecules of RNA (25S, 5.8S and 5S). Interacts with RPS21.

It localises to the cytoplasm. Required for the assembly and/or stability of the 40S ribosomal subunit. Required for the processing of the 20S rRNA-precursor to mature 18S rRNA in a late step of the maturation of 40S ribosomal subunits. This is Small ribosomal subunit protein uS2B from Vanderwaltozyma polyspora (strain ATCC 22028 / DSM 70294 / BCRC 21397 / CBS 2163 / NBRC 10782 / NRRL Y-8283 / UCD 57-17) (Kluyveromyces polysporus).